The sequence spans 96 residues: Co-chaperonin GroES (96 aa).

This sequence belongs to the GroES chaperonin family. In terms of assembly, heptamer of 7 subunits arranged in a ring. Interacts with the chaperonin GroEL.

The protein localises to the cytoplasm. Together with the chaperonin GroEL, plays an essential role in assisting protein folding. The GroEL-GroES system forms a nano-cage that allows encapsulation of the non-native substrate proteins and provides a physical environment optimized to promote and accelerate protein folding. GroES binds to the apical surface of the GroEL ring, thereby capping the opening of the GroEL channel. This chain is Co-chaperonin GroES, found in Caulobacter vibrioides (strain ATCC 19089 / CIP 103742 / CB 15) (Caulobacter crescentus).